Here is a 437-residue protein sequence, read N- to C-terminus: Glycogen synthase (437 aa).

ADP-alpha-D-glucose is bound at residue Lys-15.

Belongs to the glycosyltransferase 1 family. Bacterial/plant glycogen synthase subfamily.

It carries out the reaction [(1-&gt;4)-alpha-D-glucosyl](n) + ADP-alpha-D-glucose = [(1-&gt;4)-alpha-D-glucosyl](n+1) + ADP + H(+). It participates in glycan biosynthesis; glycogen biosynthesis. Its function is as follows. Synthesizes alpha-1,4-glucan chains using ADP-glucose. This chain is Glycogen synthase, found in Thermus thermophilus (strain ATCC 27634 / DSM 579 / HB8).